Consider the following 506-residue polypeptide: Alpha-ketoglutarate-dependent dioxygenase FTO (506 aa).

A Phosphothreonine modification is found at Thr-4. Positions 32–326 are fe2OG dioxygenase domain; that stretch reads TPKDDEFYQQ…SSTHRVAECS (295 aa). Substrate contacts are provided by Arg-96 and Tyr-108. A 2-oxoglutarate-binding site is contributed by Asn-204. Positions 212–223 are loop L1; predicted to block binding of double-stranded DNA or RNA; the sequence is PYLKEEPYFGMG. An N6-acetyllysine modification is found at Lys-215. Residues His-230 and Asp-232 each contribute to the Fe cation site. 230–233 provides a ligand contact to substrate; that stretch reads HHDE. Tyr-294 contributes to the 2-oxoglutarate binding site. His-306 lines the Fe cation pocket. Residues 315 to 317, Thr-319, and Arg-321 contribute to the 2-oxoglutarate site; that span reads RFS.

It belongs to the fto family. As to quaternary structure, monomer. May also exist as homodimer. The cofactor is Fe(2+).

The protein localises to the nucleus. It is found in the nucleus speckle. The protein resides in the cytoplasm. The enzyme catalyses a 5'-end (N(7)-methyl 5'-triphosphoguanosine)-(N(6),2'-O-dimethyladenosine) in mRNA + 2-oxoglutarate + O2 = a 5'-end (N(7)-methyl 5'-triphosphoguanosine)-(2'-O-methyladenosine) in mRNA + formaldehyde + succinate + CO2. It catalyses the reaction an N(6)-methyladenosine in mRNA + 2-oxoglutarate + O2 = an adenosine in mRNA + formaldehyde + succinate + CO2. The catalysed reaction is N(6)-methyladenosine in U6 snRNA + 2-oxoglutarate + O2 = adenosine in U6 snRNA + formaldehyde + succinate + CO2. It carries out the reaction a 5'-end (N(7)-methyl 5'-triphosphoguanosine)-(N(6),2'-O-dimethyladenosine) in U6 snRNA + 2-oxoglutarate + O2 = a 5'-end (N(7)-methyl 5'-triphosphoguanosine)-(2'-O-methyladenosine) in U6 snRNA + formaldehyde + succinate + CO2. The enzyme catalyses an N(1)-methyladenosine in tRNA + 2-oxoglutarate + O2 = an adenosine in tRNA + formaldehyde + succinate + CO2. RNA demethylase that mediates oxidative demethylation of different RNA species, such as mRNAs, tRNAs and snRNAs, and acts as a regulator of fat mass, adipogenesis and energy homeostasis. Specifically demethylates N(6)-methyladenosine (m6A) RNA, the most prevalent internal modification of messenger RNA (mRNA) in higher eukaryotes. M6A demethylation by FTO affects mRNA expression and stability. Also able to demethylate m6A in U6 small nuclear RNA (snRNA). Mediates demethylation of N(6),2'-O-dimethyladenosine cap (m6A(m)), by demethylating the N(6)-methyladenosine at the second transcribed position of mRNAs and U6 snRNA. Demethylation of m6A(m) in the 5'-cap by FTO affects mRNA stability by promoting susceptibility to decapping. Also acts as a tRNA demethylase by removing N(1)-methyladenine from various tRNAs. Has no activity towards 1-methylguanine. Has no detectable activity towards double-stranded DNA. Also able to repair alkylated DNA and RNA by oxidative demethylation: demethylates single-stranded RNA containing 3-methyluracil, single-stranded DNA containing 3-methylthymine and has low demethylase activity towards single-stranded DNA containing 1-methyladenine or 3-methylcytosine. Ability to repair alkylated DNA and RNA is however unsure in vivo. Involved in the regulation of fat mass, adipogenesis and body weight, thereby contributing to the regulation of body size and body fat accumulation. Involved in the regulation of thermogenesis and the control of adipocyte differentiation into brown or white fat cells. Regulates activity of the dopaminergic midbrain circuitry via its ability to demethylate m6A in mRNAs. Plays an oncogenic role in a number of acute myeloid leukemias by enhancing leukemic oncogene-mediated cell transformation: acts by mediating m6A demethylation of target transcripts such as MYC, CEBPA, ASB2 and RARA, leading to promote their expression. The chain is Alpha-ketoglutarate-dependent dioxygenase FTO (FTO) from Canis lupus familiaris (Dog).